Reading from the N-terminus, the 220-residue chain is Grancalcin (220 aa).

4 EF-hand domains span residues 51–86, 92–127, 122–157, and 158–193; these read SPAD…SGIS, FSLE…LNAW, AALN…MGYR, and LSPQ…ALTD. Residues D105, D107, T109, K111, E116, D135, D137, S139, T141, and E146 each contribute to the Ca(2+) site.

As to quaternary structure, homodimer. Interacts with SRI and LCP1.

It is found in the cytoplasm. Its subcellular location is the cytoplasmic granule membrane. Calcium-binding protein that may play a role in the adhesion of neutrophils to fibronectin. May play a role in the formation of focal adhesions. The polypeptide is Grancalcin (Gca) (Mus musculus (Mouse)).